Consider the following 222-residue polypeptide: Ribonuclease T (222 aa).

One can recognise an Exonuclease domain in the interval 20–194; sequence VVIDVETAGF…YDTERTAELF (175 aa). Residues aspartate 23, glutamate 25, histidine 181, and aspartate 186 each contribute to the Mg(2+) site. Residue histidine 181 is the Proton donor/acceptor of the active site.

Belongs to the RNase T family. Homodimer. The cofactor is Mg(2+).

Trims short 3' overhangs of a variety of RNA species, leaving a one or two nucleotide 3' overhang. Responsible for the end-turnover of tRNA: specifically removes the terminal AMP residue from uncharged tRNA (tRNA-C-C-A). Also appears to be involved in tRNA biosynthesis. This is Ribonuclease T from Shewanella oneidensis (strain ATCC 700550 / JCM 31522 / CIP 106686 / LMG 19005 / NCIMB 14063 / MR-1).